A 487-amino-acid chain; its full sequence is MWIILALLTLAGSRVAHGAGKNVNGVEFNLFCHIANMLNAEKIEDDKTDGLDRQAAEAWTAIDSIFTVTANESYYSEGPASAANTTDENQDAKPERVAKWVQKRNQIDKIAAPGNEKNGKYARRPRDRMSAATGAKLDTVFTLASEARVRLMQIDTEIATNKQEIRQQLGLHCSEGQGKGQSRNQHPDNAAFASDYSTACKGSTGPGKSLANDLVCICSTDTSQAQSTLQMCTSIDDANSLFSTLHKRSQCQGDFPCPHRVCAKTAETSELTETNINNCVTAFTATLGRHTKSSATNEGAYVFGSGQNSGDECNGGAATGQSCVSYHDLITAKSGTTLSGAITRLKQLQIAKAKLKARRLLLQNRERQQTRLMALADKMQELYQEALHDEVQLRKEAQNKPQETPDSDKQKACEKYHNKSKECKENGCQWSGTEETIGKCEAKPKAGTEAATTGPGERDAGATANTTGSSNSFVIKTSPLLFAFLLF.

A signal peptide spans 1–19 (MWIILALLTLAGSRVAHGA). N-linked (GlcNAc...) asparagine glycosylation is found at N71, N84, N418, and N465. The interval 443-468 (KPKAGTEAATTGPGERDAGATANTTG) is disordered. A lipid anchor (GPI-anchor amidated serine) is attached at S470. Residues 471–487 (NSFVIKTSPLLFAFLLF) constitute a propeptide, removed in mature form.

It localises to the cell membrane. VSG forms a coat on the surface of the parasite. The trypanosome evades the immune response of the host by expressing a series of antigenically distinct VSGs from an estimated 1000 VSG genes. This is Variant surface glycoprotein WRATAT B from Trypanosoma brucei rhodesiense.